We begin with the raw amino-acid sequence, 492 residues long: Cytochrome P450 26A1 (492 aa).

Residue Cys438 coordinates heme.

It belongs to the cytochrome P450 family. It depends on heme as a cofactor.

It localises to the endoplasmic reticulum membrane. The protein resides in the microsome membrane. It catalyses the reaction all-trans-retinoate + reduced [NADPH--hemoprotein reductase] + O2 = all-trans-(4S)-hydroxyretinoate + oxidized [NADPH--hemoprotein reductase] + H2O + H(+). Functionally, a cytochrome P450 monooxygenase involved in the metabolism of all-trans retinoic acid (atRA), a signaling molecule that binds to retinoic acid receptors and regulates gene transcription. Mechanistically, uses molecular oxygen inserting one oxygen atom into a substrate, and reducing the second into a water molecule, with two electrons provided by NADPH via cytochrome P450 reductase (CPR; NADPH-ferrihemoprotein reductase). Catalyzes the hydroxylation of carbon hydrogen bonds of atRA primarily at C-4. Has no activity toward 9-cis and 13-cis retinoic acid stereoisomers. May play a role in the oxidative metabolism of xenobiotics such as tazarotenic acid. This is Cytochrome P450 26A1 (cyp26a1) from Danio rerio (Zebrafish).